The sequence spans 265 residues: Regulator of calcineurin 2 (265 aa).

Serine 104 and serine 110 each carry phosphoserine. Disordered regions lie at residues 127–213 (LLSI…DKSA) and 242–265 (ENDV…EFFH). Threonine 132 carries the post-translational modification Phosphothreonine. Composition is skewed to low complexity over residues 141–161 (SSSL…LESP) and 182–202 (LSRS…QTSL). Phosphoserine occurs at positions 152, 157, 160, 183, 187, 193, 201, and 255.

In terms of processing, phosphorylation of Ser-152 and Ser-160 is induced 2-fold in response to mating pheromone.

Its subcellular location is the cytoplasm. This is Regulator of calcineurin 2 (RCN2) from Saccharomyces cerevisiae (strain ATCC 204508 / S288c) (Baker's yeast).